Consider the following 95-residue polypeptide: Small ribosomal subunit protein bS6 (95 aa).

This sequence belongs to the bacterial ribosomal protein bS6 family.

Binds together with bS18 to 16S ribosomal RNA. The chain is Small ribosomal subunit protein bS6 from Shouchella clausii (strain KSM-K16) (Alkalihalobacillus clausii).